Reading from the N-terminus, the 166-residue chain is Probable chemoreceptor glutamine deamidase CheD 1 (166 aa).

The protein belongs to the CheD family.

The catalysed reaction is L-glutaminyl-[protein] + H2O = L-glutamyl-[protein] + NH4(+). Probably deamidates glutamine residues to glutamate on methyl-accepting chemotaxis receptors (MCPs), playing an important role in chemotaxis. This is Probable chemoreceptor glutamine deamidase CheD 1 from Leptospira interrogans serogroup Icterohaemorrhagiae serovar copenhageni (strain Fiocruz L1-130).